The sequence spans 257 residues: Pyridoxal phosphate homeostasis protein (257 aa).

At Ser-2 the chain carries N-acetylserine. Lys-49 is subject to N6-(pyridoxal phosphate)lysine.

It belongs to the pyridoxal phosphate-binding protein YggS/PROSC family.

The protein localises to the cytoplasm. Its subcellular location is the nucleus. Pyridoxal 5'-phosphate (PLP)-binding protein, which may be involved in intracellular homeostatic regulation of pyridoxal 5'-phosphate (PLP), the active form of vitamin B6. In Saccharomyces cerevisiae (strain ATCC 204508 / S288c) (Baker's yeast), this protein is Pyridoxal phosphate homeostasis protein.